The sequence spans 480 residues: Probable E3 ubiquitin protein ligase DRIPH (480 aa).

The RING-type zinc finger occupies 16–57 (CPICTNPFKDATTISECLHTFCRSCIRNKFINERVNACPVCN). Disordered regions lie at residues 93-133 (GPKT…EPAN), 167-193 (RGRKASLPKKIDSKPEPELPPKEPKIK), 241-261 (TPPDIVEPEISSDDDTEESVE), and 280-356 (VNQN…EMKV). Over residues 103–112 (SSKKKRKSRT) the composition is skewed to basic residues. The span at 113–133 (SLRVSSSRVSSSPDTPLEPAN) shows a compositional bias: low complexity. The segment covering 175 to 193 (KKIDSKPEPELPPKEPKIK) has biased composition (basic and acidic residues). A compositionally biased stretch (acidic residues) spans 246 to 260 (VEPEISSDDDTEESV). Residues 298-309 (GQKLKTNGAATS) are compositionally biased toward polar residues.

The enzyme catalyses S-ubiquitinyl-[E2 ubiquitin-conjugating enzyme]-L-cysteine + [acceptor protein]-L-lysine = [E2 ubiquitin-conjugating enzyme]-L-cysteine + N(6)-ubiquitinyl-[acceptor protein]-L-lysine.. The protein operates within protein modification; protein ubiquitination. This chain is Probable E3 ubiquitin protein ligase DRIPH, found in Arabidopsis thaliana (Mouse-ear cress).